Here is a 228-residue protein sequence, read N- to C-terminus: ATP-dependent dethiobiotin synthetase BioD (228 aa).

12–17 is a binding site for ATP; that stretch reads EIGKTT. Residue threonine 16 coordinates Mg(2+). Residue lysine 37 is part of the active site. Serine 41 lines the substrate pocket. Residues aspartate 54, 116 to 119, and 205 to 207 each bind ATP; these read EGAG and PRL. Mg(2+)-binding residues include aspartate 54 and glutamate 116.

The protein belongs to the dethiobiotin synthetase family. As to quaternary structure, homodimer. It depends on Mg(2+) as a cofactor.

The protein resides in the cytoplasm. The catalysed reaction is (7R,8S)-7,8-diammoniononanoate + CO2 + ATP = (4R,5S)-dethiobiotin + ADP + phosphate + 3 H(+). The protein operates within cofactor biosynthesis; biotin biosynthesis; biotin from 7,8-diaminononanoate: step 1/2. Functionally, catalyzes a mechanistically unusual reaction, the ATP-dependent insertion of CO2 between the N7 and N8 nitrogen atoms of 7,8-diaminopelargonic acid (DAPA, also called 7,8-diammoniononanoate) to form a ureido ring. The chain is ATP-dependent dethiobiotin synthetase BioD from Pseudomonas paraeruginosa (strain DSM 24068 / PA7) (Pseudomonas aeruginosa (strain PA7)).